Reading from the N-terminus, the 466-residue chain is tRNA-2-methylthio-N(6)-dimethylallyladenosine synthase (466 aa).

An MTTase N-terminal domain is found at 2 to 118; sequence KRFYIHTIGC…LPGHIQAVAH (117 aa). [4Fe-4S] cluster is bound by residues Cys11, Cys47, Cys81, Cys157, Cys161, and Cys164. The Radical SAM core domain occupies 143–372; sequence DSSGVTGFIT…LELQNRITAE (230 aa). The 79-residue stretch at 375–453 folds into the TRAM domain; it reads RALEGRVEQV…AHSLSGIAVG (79 aa).

The protein belongs to the methylthiotransferase family. MiaB subfamily. Monomer. It depends on [4Fe-4S] cluster as a cofactor.

The protein resides in the cytoplasm. It catalyses the reaction N(6)-dimethylallyladenosine(37) in tRNA + (sulfur carrier)-SH + AH2 + 2 S-adenosyl-L-methionine = 2-methylsulfanyl-N(6)-dimethylallyladenosine(37) in tRNA + (sulfur carrier)-H + 5'-deoxyadenosine + L-methionine + A + S-adenosyl-L-homocysteine + 2 H(+). Its function is as follows. Catalyzes the methylthiolation of N6-(dimethylallyl)adenosine (i(6)A), leading to the formation of 2-methylthio-N6-(dimethylallyl)adenosine (ms(2)i(6)A) at position 37 in tRNAs that read codons beginning with uridine. This chain is tRNA-2-methylthio-N(6)-dimethylallyladenosine synthase, found in Desulfosudis oleivorans (strain DSM 6200 / JCM 39069 / Hxd3) (Desulfococcus oleovorans).